The sequence spans 197 residues: Putative WUSCHEL-related homeobox 10 (197 aa).

Positions 75–139 form a DNA-binding region, homeobox; WUS-type; that stretch reads STRPRWTPTT…NRRARSKRKQ (65 aa). Residues 132–168 are disordered; it reads RARSKRKQPPTTTITSSQADDAAVTTTEERGRCGDDS. Polar residues predominate over residues 140–150; it reads PPTTTITSSQA.

The protein belongs to the WUS homeobox family.

The protein localises to the nucleus. Potential transcription factor that plays a central role during developmental processes. The protein is Putative WUSCHEL-related homeobox 10 (WOX10) of Arabidopsis thaliana (Mouse-ear cress).